Consider the following 416-residue polypeptide: Serine hydroxymethyltransferase 1 (416 aa).

(6S)-5,6,7,8-tetrahydrofolate-binding positions include L121 and 125-127 (GHL). N6-(pyridoxal phosphate)lysine is present on K229. Residues E245 and 354-356 (SPF) each bind (6S)-5,6,7,8-tetrahydrofolate.

The protein belongs to the SHMT family. In terms of assembly, homodimer. It depends on pyridoxal 5'-phosphate as a cofactor.

The protein localises to the cytoplasm. The catalysed reaction is (6R)-5,10-methylene-5,6,7,8-tetrahydrofolate + glycine + H2O = (6S)-5,6,7,8-tetrahydrofolate + L-serine. It participates in one-carbon metabolism; tetrahydrofolate interconversion. Its pathway is amino-acid biosynthesis; glycine biosynthesis; glycine from L-serine: step 1/1. Catalyzes the reversible interconversion of serine and glycine with tetrahydrofolate (THF) serving as the one-carbon carrier. This reaction serves as the major source of one-carbon groups required for the biosynthesis of purines, thymidylate, methionine, and other important biomolecules. Also exhibits THF-independent aldolase activity toward beta-hydroxyamino acids, producing glycine and aldehydes, via a retro-aldol mechanism. In Photobacterium profundum (strain SS9), this protein is Serine hydroxymethyltransferase 1.